Consider the following 360-residue polypeptide: Protein Wnt-2 (360 aa).

The N-terminal stretch at 1-25 (MNAPLGGIWLWLPLLLTWLTPEVNS) is a signal peptide. 11 cysteine pairs are disulfide-bonded: Cys-76/Cys-87, Cys-127/Cys-135, Cys-137/Cys-157, Cys-206/Cys-220, Cys-208/Cys-215, Cys-278/Cys-309, Cys-294/Cys-304, Cys-308/Cys-348, Cys-324/Cys-339, Cys-326/Cys-336, and Cys-331/Cys-332. The O-palmitoleoyl serine; by PORCN moiety is linked to residue Ser-212. N-linked (GlcNAc...) asparagine glycosylation occurs at Asn-295.

It belongs to the Wnt family. Palmitoleoylation is required for efficient binding to frizzled receptors. Depalmitoleoylation leads to Wnt signaling pathway inhibition.

The protein localises to the secreted. It localises to the extracellular space. Its subcellular location is the extracellular matrix. Functionally, ligand for members of the frizzled family of seven transmembrane receptors. Functions in the canonical Wnt signaling pathway that results in activation of transcription factors of the TCF/LEF family. Functions as a upstream regulator of FGF10 expression. Plays an important role in embryonic lung development. May contribute to embryonic brain development by regulating the proliferation of dopaminergic precursors and neurons. In Gorilla gorilla gorilla (Western lowland gorilla), this protein is Protein Wnt-2 (WNT2).